The primary structure comprises 3790 residues: Transcription-associated protein 1 (3790 aa).

HEAT repeat units lie at residues 98 to 136 (RQHV…HFRP), 335 to 381 (TDLR…HVRQ), 740 to 778 (DLLY…ELCL), 1185 to 1223 (AKAT…IQSK), 1332 to 1370 (IGYK…GVTL), and 1826 to 1864 (AIHK…AMPL). Residues 2610 to 3173 (LLAYLGKSHN…YFPIRTLYLT (564 aa)) form the FAT domain. Residues 3429–3753 (MPRVEIVQKN…AVDIIMTRFN (325 aa)) form the PI3K/PI4K catalytic domain. Positions 3435 to 3441 (VQKNNTA) are G-loop. The segment at 3616–3624 (NLTRLNADM) is catalytic loop. The tract at residues 3636-3661 (ISYFKFDVNDDKCQLNQHRPVPFRLT) is activation loop. The FATC domain occupies 3758–3790 (FDSIENKKISVLVQSATNIDNLCRMDPAWHPWL).

The protein belongs to the PI3/PI4-kinase family. TRA1 subfamily. As to quaternary structure, component of the Tip60 chromatin-remodeling complex which contains the catalytic subunit Tip60 and the subunits Domino, Tra1, Brd8, E(Pc), DMAP1, Pontin, Reptin, Ing3, Act87E, BAP55, Mrg15, MrgBP, Gas41 and YL-1. Probable component of some SAGA complex. Interacts with Spt3, Gcn5, Ada3 and Ada2b. Ubiquitous.

It is found in the nucleus. Its subcellular location is the cytoplasm. The protein resides in the chromosome. Functionally, part of the Tip60 chromatin-remodeling complex which is involved in DNA repair. Upon induction of DNA double-strand breaks, this complex acetylates phosphorylated H2AV in nucleosomes and exchanges it with unmodified H2AV. During wing development, required for activity of Notch and its coactivator mam. Function in promoting mam function is likely to involve both the Tip60 and SAGA complexes. The polypeptide is Transcription-associated protein 1 (Nipped-A) (Drosophila melanogaster (Fruit fly)).